The sequence spans 427 residues: Large ribosomal subunit protein uL4 (427 aa).

An N-acetylalanine modification is found at Ala-2. Residue Lys-14 is modified to N6-acetyllysine. Residue Arg-97 is modified to Omega-N-methylarginine. Residue Lys-106 is modified to N6-acetyllysine. A Glycyl lysine isopeptide (Lys-Gly) (interchain with G-Cter in SUMO2) cross-link involves residue Lys-239. Position 259 is an N6-acetyllysine (Lys-259). A Phosphothreonine modification is found at Thr-266. 2 positions are modified to phosphoserine: Ser-290 and Ser-295. At Arg-300 the chain carries Citrulline. Lys-327 participates in a covalent cross-link: Glycyl lysine isopeptide (Lys-Gly) (interchain with G-Cter in SUMO2). N6-acetyllysine is present on residues Lys-333 and Lys-353. Lys-364 carries the N6-acetyllysine; alternate modification. Lys-364 participates in a covalent cross-link: Glycyl lysine isopeptide (Lys-Gly) (interchain with G-Cter in SUMO1); alternate. Residue Ser-365 is modified to Phosphoserine. Positions 369 to 427 (AAVAGKKPVVGKKGKKAAVGVKKQKKPLVGKKAAATKKPAPEKKPAEKKPTTEEKKPAA) are disordered. Positions 377-397 (VVGKKGKKAAVGVKKQKKPLV) are enriched in basic residues. The segment covering 407–427 (PAPEKKPAEKKPTTEEKKPAA) has biased composition (basic and acidic residues).

The protein belongs to the universal ribosomal protein uL4 family. In terms of assembly, component of the large ribosomal subunit. May bind IPO9 with low affinity. Interacts with RBM3. In terms of processing, citrullinated by PADI4.

It localises to the cytoplasm. Its function is as follows. Component of the large ribosomal subunit. The ribosome is a large ribonucleoprotein complex responsible for the synthesis of proteins in the cell. This Pongo abelii (Sumatran orangutan) protein is Large ribosomal subunit protein uL4 (RPL4).